The primary structure comprises 267 residues: Hydroxyethylthiazole kinase (267 aa).

Residue M44 participates in substrate binding. ATP contacts are provided by R120 and T165. Substrate is bound at residue G192.

Belongs to the Thz kinase family. Mg(2+) serves as cofactor.

The enzyme catalyses 5-(2-hydroxyethyl)-4-methylthiazole + ATP = 4-methyl-5-(2-phosphooxyethyl)-thiazole + ADP + H(+). It participates in cofactor biosynthesis; thiamine diphosphate biosynthesis; 4-methyl-5-(2-phosphoethyl)-thiazole from 5-(2-hydroxyethyl)-4-methylthiazole: step 1/1. In terms of biological role, catalyzes the phosphorylation of the hydroxyl group of 4-methyl-5-beta-hydroxyethylthiazole (THZ). The protein is Hydroxyethylthiazole kinase of Carboxydothermus hydrogenoformans (strain ATCC BAA-161 / DSM 6008 / Z-2901).